The sequence spans 126 residues: Large ribosomal subunit protein bL12 (126 aa).

This sequence belongs to the bacterial ribosomal protein bL12 family. In terms of assembly, homodimer. Part of the ribosomal stalk of the 50S ribosomal subunit. Forms a multimeric L10(L12)X complex, where L10 forms an elongated spine to which 2 to 4 L12 dimers bind in a sequential fashion. Binds GTP-bound translation factors.

In terms of biological role, forms part of the ribosomal stalk which helps the ribosome interact with GTP-bound translation factors. Is thus essential for accurate translation. The chain is Large ribosomal subunit protein bL12 from Elusimicrobium minutum (strain Pei191).